Reading from the N-terminus, the 529-residue chain is DNA polymerase lambda (529 aa).

One can recognise a BRCT domain in the interval 14 to 109 (DPEGMFAGMV…EKANEDLYVL (96 aa)). A disordered region spans residues 119–199 (PKKSLPAISG…ESTSVYKPPD (81 aa)). Polar residues predominate over residues 153–175 (SHSNTQGSPDSPTSCSVPSTSAS). Low complexity predominate over residues 182-193 (ETPTSPQSESTS). The tract at residues 213–227 (NIYRALGEDRRSFSY) is DNA-binding. Histidine 260 is a catalytic residue. The tract at residues 295-298 (GPAT) is DNA-binding. Residues arginine 336, 367–370 (SYRR), and 376–379 (GDLD) each bind dCTP. Residues 370–379 (RGKATCGDLD) are involved in primer binding. The Mn(2+) site is built by aspartate 377, aspartate 379, and aspartate 444. The segment at 418 to 459 (EEGTDSGVDTYFGLCTYPGQELRRRIDFKVYPRDIYSFGLIA) is DNA-binding. Asparagine 467 is a binding site for dCTP.

It belongs to the DNA polymerase type-X family. In terms of assembly, interacts with the DNA repair proteins XRCC4 and LIG4. Interacts with HSP90-1. It depends on Mn(2+) as a cofactor.

The protein localises to the nucleus. It carries out the reaction DNA(n) + a 2'-deoxyribonucleoside 5'-triphosphate = DNA(n+1) + diphosphate. In terms of biological role, repair polymerase involved in base excision repair (BER) and responsible for repair of lesions that give rise to abasic (AP) sites in DNA. Has both DNA polymerase and terminal transferase activities. Has a 5'-deoxyribose-5-phosphate lyase (dRP lyase) activity. Involved in the repair of transposon-induced DNA double strand breaks (DSBs). Involved in repair of UV-B-mediated DNA damage during seedling development through an excision repair mechanism. Involved the repair of DSBs induced by high salinity and DNA cross-linking agent. Functions via the DNA non-homologous end joining (NHEJ) pathway. The polypeptide is DNA polymerase lambda (Arabidopsis thaliana (Mouse-ear cress)).